Reading from the N-terminus, the 744-residue chain is Zinc finger protein 366 (744 aa).

The disordered stretch occupies residues 206–228; sequence KQPPEPLLPRKAEPQESEETKQK. The span at 213-228 shows a compositional bias: basic and acidic residues; the sequence is LPRKAEPQESEETKQK. C2H2-type zinc fingers lie at residues 253–275, 281–303, 309–331, 337–359, 365–387, 393–415, 421–443, 449–471, 477–499, 505–527, and 533–556; these read WQCP…ILGH, HACT…MLTH, HKCQ…MMQH, HNCR…EAKH, NICV…LTTH, YNCS…MMKH, YICS…SLTH, HKCG…VLIH, YQCH…MIVH, FKCK…MHLH, and FKCL…KVKH. The interaction with NRIP1 stretch occupies residues 455–744; it reads GREFTLLANM…MEKQAVLLGI (290 aa). The PXDLS signature appears at 590-594; it reads PFDLS. Disordered regions lie at residues 603-627 and 664-692; these read VFQS…NCYE and KEEK…QERD.

Interacts with ESR1 and NRIP1. Interacts (via PXDLS motif) with CTBP1. Expressed in immature and mature dendritic cells (DCs). Not detected in other blood cell types.

The protein resides in the nucleus. Has transcriptional repression activity. Acts as a corepressor of ESR1; the function seems to involve CTBP1 and histone deacetylases. In Homo sapiens (Human), this protein is Zinc finger protein 366.